A 63-amino-acid polypeptide reads, in one-letter code: EGSGGSGSSGNFTTGSNVRMSSVTNTSNAGTGTSGGGNSAAASGASVNAPPVTVTLTESLLNK.

The tract at residues 1–63 (EGSGGSGSSG…VTLTESLLNK (63 aa)) is disordered. Composition is skewed to low complexity over residues 9–31 (SGNF…NAGT) and 39–49 (SAAASGASVNA). Residues 54–63 (VTLTESLLNK) are compositionally biased toward polar residues.

Forms a heterodimer with timeless (TIM); the complex then translocates into the nucleus. Phosphorylated with a circadian rhythmicity, probably by the double-time protein (dbt). Phosphorylation could be implicated in the stability of per monomer and in the formation of heterodimer per-tim.

It localises to the nucleus. The protein localises to the cytoplasm. It is found in the perinuclear region. Functionally, essential for biological clock functions. Determines the period length of circadian and ultradian rhythms; an increase in PER dosage leads to shortened circadian rhythms and a decrease leads to lengthened circadian rhythms. Essential for the circadian rhythmicity of locomotor activity, eclosion behavior, and for the rhythmic component of the male courtship song that originates in the thoracic nervous system. The biological cycle depends on the rhythmic formation and nuclear localization of the TIM-PER complex. Light induces the degradation of TIM, which promotes elimination of PER. Nuclear activity of the heterodimer coordinatively regulates PER and TIM transcription through a negative feedback loop. Behaves as a negative element in circadian transcriptional loop. Does not appear to bind DNA, suggesting indirect transcriptional inhibition. This is Period circadian protein (per) from Drosophila immigrans (Fruit fly).